Consider the following 437-residue polypeptide: Enolase superfamily member DDB_G0284701 (437 aa).

The active-site Proton acceptor is K217. D251, E279, and D321 together coordinate Mn(2+). The active-site Proton donor is D395.

Belongs to the mandelate racemase/muconate lactonizing enzyme family.

The sequence is that of Enolase superfamily member DDB_G0284701 from Dictyostelium discoideum (Social amoeba).